The sequence spans 340 residues: Uroporphyrinogen decarboxylase (340 aa).

Substrate contacts are provided by residues 23 to 27 (RQAGR), D72, Y147, T202, and H316.

It belongs to the uroporphyrinogen decarboxylase family. In terms of assembly, homodimer.

It localises to the cytoplasm. It carries out the reaction uroporphyrinogen III + 4 H(+) = coproporphyrinogen III + 4 CO2. It functions in the pathway porphyrin-containing compound metabolism; protoporphyrin-IX biosynthesis; coproporphyrinogen-III from 5-aminolevulinate: step 4/4. Functionally, catalyzes the decarboxylation of four acetate groups of uroporphyrinogen-III to yield coproporphyrinogen-III. The protein is Uroporphyrinogen decarboxylase of Trichlorobacter lovleyi (strain ATCC BAA-1151 / DSM 17278 / SZ) (Geobacter lovleyi).